Reading from the N-terminus, the 402-residue chain is Arginine biosynthesis bifunctional protein ArgJ (402 aa).

Positions 149, 175, 186, 266, 397, and 402 each coordinate substrate. T186 (nucleophile) is an active-site residue.

Belongs to the ArgJ family. As to quaternary structure, heterotetramer of two alpha and two beta chains.

The protein localises to the cytoplasm. It carries out the reaction N(2)-acetyl-L-ornithine + L-glutamate = N-acetyl-L-glutamate + L-ornithine. The enzyme catalyses L-glutamate + acetyl-CoA = N-acetyl-L-glutamate + CoA + H(+). It functions in the pathway amino-acid biosynthesis; L-arginine biosynthesis; L-ornithine and N-acetyl-L-glutamate from L-glutamate and N(2)-acetyl-L-ornithine (cyclic): step 1/1. It participates in amino-acid biosynthesis; L-arginine biosynthesis; N(2)-acetyl-L-ornithine from L-glutamate: step 1/4. Catalyzes two activities which are involved in the cyclic version of arginine biosynthesis: the synthesis of N-acetylglutamate from glutamate and acetyl-CoA as the acetyl donor, and of ornithine by transacetylation between N(2)-acetylornithine and glutamate. This is Arginine biosynthesis bifunctional protein ArgJ from Prochlorococcus marinus subsp. pastoris (strain CCMP1986 / NIES-2087 / MED4).